The following is a 1588-amino-acid chain: Pentafunctional AROM polypeptide (1588 aa).

The interval 1–392 (MVQLAKVPIL…YGDSAQFVSD (392 aa)) is 3-dehydroquinate synthase. NAD(+) is bound by residues 43 to 45 (DTN), 78 to 81 (ETSK), 109 to 111 (GGV), and Asp-114. Arg-125 contacts 7-phospho-2-dehydro-3-deoxy-D-arabino-heptonate. NAD(+) is bound at residue 134–135 (TS). The 7-phospho-2-dehydro-3-deoxy-D-arabino-heptonate site is built by Asp-141 and Lys-147. Lys-156 contributes to the NAD(+) binding site. Asn-157 lines the 7-phospho-2-dehydro-3-deoxy-D-arabino-heptonate pocket. NAD(+) is bound by residues 174-177 (WLET) and Asn-185. Glu-189 contacts Zn(2+). 7-phospho-2-dehydro-3-deoxy-D-arabino-heptonate contacts are provided by residues 189–192 (EVIK) and Lys-258. The active-site Proton acceptor; for 3-dehydroquinate synthase activity is the Glu-268. Residues 272–276 (RNLLN) and His-279 each bind 7-phospho-2-dehydro-3-deoxy-D-arabino-heptonate. His-279 contacts Zn(2+). The active-site Proton acceptor; for 3-dehydroquinate synthase activity is the His-283. 7-phospho-2-dehydro-3-deoxy-D-arabino-heptonate-binding residues include His-295 and Lys-364. His-295 is a Zn(2+) binding site. Residues 405-871 (VYPFKDIPAD…WDVLHSELGA (467 aa)) are EPSP synthase. Catalysis depends on Cys-853, which acts as the For EPSP synthase activity. Positions 890–1080 (SVVIIGMRAA…IPSGRSAFVC (191 aa)) are shikimate kinase. 895–902 (GMRAAGKT) serves as a coordination point for ATP. Residues 1081–1293 (LTFDDLTEQT…AAPGQLTVAQ (213 aa)) are 3-dehydroquinase. His-1198 functions as the Proton acceptor; for 3-dehydroquinate dehydratase activity in the catalytic mechanism. The active-site Schiff-base intermediate with substrate; for 3-dehydroquinate dehydratase activity is the Lys-1227. The tract at residues 1306-1588 (PKELFVVGKP…KAIFDAVTKE (283 aa)) is shikimate dehydrogenase.

This sequence in the N-terminal section; belongs to the sugar phosphate cyclases superfamily. Dehydroquinate synthase family. In the 2nd section; belongs to the EPSP synthase family. It in the 3rd section; belongs to the shikimate kinase family. The protein in the 4th section; belongs to the type-I 3-dehydroquinase family. This sequence in the C-terminal section; belongs to the shikimate dehydrogenase family. As to quaternary structure, homodimer. The cofactor is Zn(2+).

It is found in the cytoplasm. The enzyme catalyses 7-phospho-2-dehydro-3-deoxy-D-arabino-heptonate = 3-dehydroquinate + phosphate. The catalysed reaction is 3-dehydroquinate = 3-dehydroshikimate + H2O. It carries out the reaction shikimate + NADP(+) = 3-dehydroshikimate + NADPH + H(+). It catalyses the reaction shikimate + ATP = 3-phosphoshikimate + ADP + H(+). The enzyme catalyses 3-phosphoshikimate + phosphoenolpyruvate = 5-O-(1-carboxyvinyl)-3-phosphoshikimate + phosphate. The protein operates within metabolic intermediate biosynthesis; chorismate biosynthesis; chorismate from D-erythrose 4-phosphate and phosphoenolpyruvate: step 2/7. It participates in metabolic intermediate biosynthesis; chorismate biosynthesis; chorismate from D-erythrose 4-phosphate and phosphoenolpyruvate: step 3/7. It functions in the pathway metabolic intermediate biosynthesis; chorismate biosynthesis; chorismate from D-erythrose 4-phosphate and phosphoenolpyruvate: step 4/7. Its pathway is metabolic intermediate biosynthesis; chorismate biosynthesis; chorismate from D-erythrose 4-phosphate and phosphoenolpyruvate: step 5/7. The protein operates within metabolic intermediate biosynthesis; chorismate biosynthesis; chorismate from D-erythrose 4-phosphate and phosphoenolpyruvate: step 6/7. In terms of biological role, the AROM polypeptide catalyzes 5 consecutive enzymatic reactions in prechorismate polyaromatic amino acid biosynthesis. The chain is Pentafunctional AROM polypeptide from Saccharomyces cerevisiae (strain JAY291) (Baker's yeast).